The primary structure comprises 37 residues: Large ribosomal subunit protein bL36 (37 aa).

This sequence belongs to the bacterial ribosomal protein bL36 family.

The polypeptide is Large ribosomal subunit protein bL36 (Bifidobacterium adolescentis (strain ATCC 15703 / DSM 20083 / NCTC 11814 / E194a)).